The chain runs to 303 residues: Aquaporin NIP1-2 (303 aa).

Residues 1–39 (MAGREDGAAAGAMEEGQDSKEVKCESSEDGSSSSSSSRC) are disordered. Basic and acidic residues predominate over residues 17 to 26 (QDSKEVKCES). The next 2 membrane-spanning stretches (helical) occupy residues 66-86 (ILAE…AVVV) and 91-111 (GGAV…MVLV). The NPA 1 motif lies at 123–125 (NPA). The next 3 helical transmembrane spans lie at 145 to 165 (VVAQ…VFGG), 188 to 208 (AAAL…GVAT), and 212 to 232 (AIGE…VLFA). An NPA 2 motif is present at residues 241-243 (NPA). Residues 255 to 275 (YGGVWVYVAAPVSGTVCGAWA) traverse the membrane as a helical segment.

The protein belongs to the MIP/aquaporin (TC 1.A.8) family. NIP (TC 1.A.8.12) subfamily. In terms of tissue distribution, expressed in roots and leaves, and at lower levels in anthers.

The protein resides in the membrane. Aquaporins facilitate the transport of water and small neutral solutes across cell membranes. The chain is Aquaporin NIP1-2 (NIP1-2) from Oryza sativa subsp. japonica (Rice).